Here is a 264-residue protein sequence, read N- to C-terminus: Small ribosomal subunit protein eS1 (264 aa).

At Lys-34 the chain carries N6-acetyllysine; alternate. A Glycyl lysine isopeptide (Lys-Gly) (interchain with G-Cter in SUMO2); alternate cross-link involves residue Lys-34. N6-acetyllysine is present on Lys-56. Position 155 is an ADP-ribosyltyrosine (Tyr-155). Positions 232–264 are disordered; the sequence is HGEGGSSGKTTGDETGAKVERADGYEPPVQESV. Ser-237 is modified (phosphoserine). Basic and acidic residues predominate over residues 242-255; the sequence is TGDETGAKVERADG. At Lys-249 the chain carries N6-acetyllysine; alternate. Lys-249 is covalently cross-linked (Glycyl lysine isopeptide (Lys-Gly) (interchain with G-Cter in SUMO2); alternate). The residue at position 256 (Tyr-256) is a Phosphotyrosine. Phosphoserine is present on Ser-263.

This sequence belongs to the eukaryotic ribosomal protein eS1 family. As to quaternary structure, component of the small ribosomal subunit. Mature ribosomes consist of a small (40S) and a large (60S) subunit. The 40S subunit contains about 33 different proteins and 1 molecule of RNA (18S). The 60S subunit contains about 49 different proteins and 3 molecules of RNA (28S, 5.8S and 5S). Identified in a IGF2BP1-dependent mRNP granule complex containing untranslated mRNAs. Binds with high affinity to IPO4. Interacts with DDIT3. Part of the small subunit (SSU) processome, composed of more than 70 proteins and the RNA chaperone small nucleolar RNA (snoRNA) U3. The protein designated S3b has the same amino acid sequence as S3a except that it lacks the C-terminal 12 residues. It is probable that S3a is converted by proteolysis, either physiologically or fortuitously, to S3b. In terms of processing, ADP-ribosylated at Tyr-155 by PARP1 in presence of HPF1.

The protein localises to the cytoplasm. It is found in the nucleus. The protein resides in the nucleolus. Component of the small ribosomal subunit. The ribosome is a large ribonucleoprotein complex responsible for the synthesis of proteins in the cell. Part of the small subunit (SSU) processome, first precursor of the small eukaryotic ribosomal subunit. During the assembly of the SSU processome in the nucleolus, many ribosome biogenesis factors, an RNA chaperone and ribosomal proteins associate with the nascent pre-rRNA and work in concert to generate RNA folding, modifications, rearrangements and cleavage as well as targeted degradation of pre-ribosomal RNA by the RNA exosome. May play a role during erythropoiesis through regulation of transcription factor DDIT3. This chain is Small ribosomal subunit protein eS1 (Rps3a), found in Rattus norvegicus (Rat).